The primary structure comprises 388 residues: Protein DJ-1 homolog D (388 aa).

PfpI endopeptidase domains are found at residues 5–190 (RTVL…KALG) and 198–383 (KRIL…ALLG). The active-site Nucleophile is the Cys120. Cys120 is subject to Cysteine sulfenic acid (-SOH). Residue His121 is part of the active site. The active-site Nucleophile is the Cys313. Cysteine sulfinic acid (-SO2H) is present on Cys313. His314 is an active-site residue.

Belongs to the peptidase C56 family. Homotrimer. Cys-120 and Cys-313 are oxidized to sulfinic acid.

The enzyme catalyses (R)-S-lactoylglutathione = methylglyoxal + glutathione. Its function is as follows. Possesses glyoxalase I activity. Catalyzes the conversion of hemimercaptal, formed from methylglyoxal and glutathione, to S-lactoylglutathione. May be involved in oxidative stress response. This Arabidopsis thaliana (Mouse-ear cress) protein is Protein DJ-1 homolog D (DJ1D).